The chain runs to 373 residues: Putative F-box/kelch-repeat protein At3g19410 (373 aa).

Residues 1-46 form the F-box domain; it reads MTIPELPKDLIEEILCYVPATYLKRLRSTCKGWNRLFKDDRRFAKK. Kelch repeat units lie at residues 101 to 148, 149 to 200, and 329 to 373; these read RIFH…FVLG, YYQE…QCVS, and KLYI…EEKS.

This is Putative F-box/kelch-repeat protein At3g19410 from Arabidopsis thaliana (Mouse-ear cress).